The following is a 987-amino-acid chain: Collagen alpha-1(I) chain (987 aa).

Residues 1–21 are compositionally biased toward pro residues; it reads SVPGPMGPSGPRGLPGPPGPG. The disordered stretch occupies residues 1-987; sequence SVPGPMGPSG…PGPPGPPGPP (987 aa). 4-hydroxyproline occurs at positions 15, 18, 20, 29, 32, 35, 50, 65, 71, 80, and 86. Low complexity predominate over residues 23-41; the sequence is QGFQGPPGEPGEPGSSGPM. Positions 53 to 67 are enriched in basic and acidic residues; sequence NGDDGEAGKPGRPGE. Lysine 89 is modified (5-hydroxylysine; alternate). A glycan (O-linked (Gal...) hydroxylysine; alternate) is linked at lysine 89. At serine 95 the chain carries Phosphoserine. The span at 103-119 shows a compositional bias: low complexity; that stretch reads DAGPAGPKGEPGSPGEN. 4-hydroxyproline is present on residues proline 113, proline 116, proline 122, proline 131, proline 137, proline 158, proline 167, proline 170, proline 197, proline 200, proline 212, proline 218, proline 227, proline 233, proline 236, and proline 251. Over residues 137 to 155 the composition is skewed to low complexity; the sequence is PGASGPAGARGNDGAAGAA. Residues 157–169 are compositionally biased toward pro residues; the sequence is PPGPTGPAGPPGF. Positions 203-253 are enriched in low complexity; it reads AGAAGPAGNPGADGQPGAKGANGAPGIAGAPGFPGARGPSGPQGPSGAPGP. Lysine 254 carries the post-translational modification 5-hydroxylysine. A 4-hydroxyproline mark is found at proline 260, proline 263, proline 275, proline 284, proline 299, proline 305, proline 314, and proline 320. Positions 309 to 318 are enriched in gly residues; sequence GERGGPGSRG. At lysine 329 the chain carries 5-hydroxylysine. 24 positions are modified to 4-hydroxyproline: proline 338, proline 347, proline 353, proline 359, proline 368, proline 371, proline 380, proline 389, proline 395, proline 407, proline 416, proline 425, proline 428, proline 446, proline 468, proline 474, proline 480, proline 486, proline 492, proline 504, proline 513, proline 526, proline 532, and proline 541. Residues 362-388 show a composition bias toward low complexity; that stretch reads KGLTGSPGSPGPDGKTGPPGPAGQDGR. Over residues 397–416 the composition is skewed to low complexity; the sequence is ARGQAGVMGFPGPKGAAGEP. Positions 458–483 are enriched in low complexity; sequence QGPAPGFQGLPGPAGPPGEAGKPGEQ. The residue at position 553 (lysine 553) is a 5-hydroxylysine. 3 positions are modified to 4-hydroxyproline: proline 559, proline 574, and proline 580. Residues 586 to 600 show a composition bias toward low complexity; the sequence is SGPSGPAGPTGARGA. Serine 589 is modified (phosphoserine). 4-hydroxyproline is present on residues proline 601, proline 607, proline 610, proline 619, proline 625, proline 643, proline 652, and proline 661. Over residues 613-640 the composition is skewed to low complexity; it reads AGFAGPPGADGQPGAKGEPGDAGAKGDA. Pro residues predominate over residues 642-654; that stretch reads PPGPAGPTGPPGP. A 5-hydroxylysine modification is found at lysine 664. Positions 669–685 are enriched in low complexity; it reads SAGPPGATGFPGAAGRV. A 4-hydroxyproline mark is found at proline 673 and proline 679. 3-hydroxyproline is present on proline 687. Proline 688, proline 697, proline 700, proline 721, proline 730, proline 738, proline 747, proline 765, proline 774, proline 777, proline 783, proline 798, proline 804, proline 810, proline 819, and proline 825 each carry 4-hydroxyproline. Over residues 714–723 the composition is skewed to low complexity; sequence ETGPAGRPGE. A compositionally biased stretch (low complexity) spans 735-747; sequence KGSPGADGPAGAP. The segment covering 797-807 has biased composition (pro residues); that stretch reads PPGPMGPPGLA. Residues 809-824 show a composition bias toward low complexity; it reads PPGESGREGSPGAEGS. Residue lysine 834 is modified to 5-hydroxylysine. The segment covering 843–858 has biased composition (pro residues); it reads AGPPGAPGAPGAPGPV. A 4-hydroxyproline mark is found at proline 846, proline 849, and proline 852. Residues 879–893 are compositionally biased toward low complexity; it reads AGPAGARGPAGPQGP. Residues 894–905 show a composition bias toward basic and acidic residues; the sequence is RGDKGETGEQGD. Residue lysine 897 is modified to 5-hydroxylysine. Proline 918, proline 921, proline 939, and proline 954 each carry 4-hydroxyproline. Residues 921–954 are compositionally biased toward low complexity; sequence PGEQGPSGASGPAGPRGPPGSAGSPGKDGLNGLP. Proline 959 carries the 3-hydroxyproline modification. A 4-hydroxyproline modification is found at proline 960. Pro residues predominate over residues 972–987; that stretch reads VGPPGPPGPPGPPGPP. Proline 974 bears the 3-hydroxyproline mark. The residue at position 975 (proline 975) is a 4-hydroxyproline. At proline 977 the chain carries 3-hydroxyproline. Proline 978 carries the 4-hydroxyproline modification. At proline 980 the chain carries 3-hydroxyproline. 3 positions are modified to 4-hydroxyproline: proline 981, proline 984, and proline 987.

This sequence belongs to the fibrillar collagen family. Trimers of one alpha 2(I) and two alpha 1(I) chains. Post-translationally, contains mostly 4-hydroxyproline. Proline residues at the third position of the tripeptide repeating unit (G-X-Y) are hydroxylated in some or all of the chains. In terms of processing, contains 3-hydroxyproline at a few sites. This modification occurs on the first proline residue in the sequence motif Gly-Pro-Hyp, where Hyp is 4-hydroxyproline. Lysine residues at the third position of the tripeptide repeating unit (G-X-Y) are 5-hydroxylated in some or all of the chains. Post-translationally, O-glycosylated on hydroxylated lysine residues. The O-linked glycan consists of a Glc-Gal disaccharide. Expressed in bones.

It localises to the secreted. The protein resides in the extracellular space. Its subcellular location is the extracellular matrix. Functionally, type I collagen is a member of group I collagen (fibrillar forming collagen). The protein is Collagen alpha-1(I) chain of Glossotherium robustum (Ground sloth).